Consider the following 1015-residue polypeptide: MASSPLPGPNDILLASPSSAFQPDTLSQPRPGHANLKPNQVGQVILYGIPIVSLVIDGQERLCLAQISNTLLKNFSYNEIHNRRVALGITCVQCTPVQLEILRRAGAMPISSRRCGMITKREAERLCKSFLGENRPPKLPDNFAFDVSHECAWGCRGSFIPARYNSSRAKCIKCSYCNMYFSPNKFIFHSHRTPDAKYTQPDAANFNSWRRHLKLTDKSPQDELVFAWEDVKAMFNGGSRKRALPQPGAHPACHPLSSVKAAAVAAAAAVAGGGGLLGPHLLGAPPPPPPPPPPLAELAGAPHAHHKRPRFDDDDDSLQEAAVVAAASLSAAAASLSVAAASGGAGTGGGGAGGGCVAGVGVGAGAGAGAGAGAKGPRSYPVIPVPSKGSFGGVLQKFPGCGGLFPHPYTFPAAAAAFSLCHKKEDAGAAAEALGGAGAGGAGAAPKAGLSGLFWPAGRKDAFYPPFCMFWPPRTPGGLPVPTYLQPPPQPPSALGCALGESPALLRQAFLDLAEPGGAAGSAEAAPPPGQPPQVVANGPGSGPPPPAGGAGSRDALFESPPGGSGGDCSAGSTPPADSVAAAGAGAAAAGSGPAGSRVPAPHHPHLLEGRKAGGGSYHHSSAFRPVGGKDDAESLAKLHGASAGAPHSAQTHPHHHHHPHHHHHHHHPPQPPSPLLLLPPQPDEPGSERHHPAPPPPPPPPPPPPLAQHPHHRGLLSPGGTSCCYPSEDSSEDEDDEEEEQEVDVEGHKPPEGEEEEEGRDPDDDEEEDEETEVLLGDPLVGGGRFLQGRGPSEKGSSRDRAPAVAGAFPLGLNSSRLLQEDGKLGDPGSDLPPPPPPPLAPQKASGGGSSSPGSPVHHPSLEEQPSYKDSQKTKENNQVIVSTKDDNSFSDKNKEHSFFITDSDASGGDFWRERSGEHTQETNSPHSLKKDVENMGKEELQKVLFEQIDLRRRLEQEFQVLKGNTSFPVFNNFQDQMKRELAYREEMVQQLQIIPYAASLIRKEKLGAHLSKS.

2 disordered regions span residues 280 to 316 (HLLGAPPPPPPPPPPLAELAGAPHAHHKRPRFDDDDD) and 518 to 934 (GAAG…KKDV). Residues 284–295 (APPPPPPPPPPL) are compositionally biased toward pro residues. Over residues 575 to 600 (PPADSVAAAGAGAAAAGSGPAGSRVP) the composition is skewed to low complexity. The span at 628–637 (GGKDDAESLA) shows a compositional bias: basic and acidic residues. The span at 653–669 (HPHHHHHPHHHHHHHHP) shows a compositional bias: basic residues. 2 stretches are compositionally biased toward pro residues: residues 670–684 (PQPPSPLLLLPPQPD) and 694–708 (APPPPPPPPPPPPLA). Composition is skewed to acidic residues over residues 730-745 (DSSEDEDDEEEEQEVD) and 754-774 (GEEEEEGRDPDDDEEEDEETE). Basic and acidic residues predominate over residues 793 to 803 (PSEKGSSRDRA). The span at 832-842 (DLPPPPPPPLA) shows a compositional bias: pro residues. Composition is skewed to basic and acidic residues over residues 861 to 877 (PSLEEQPSYKDSQKTKE), 885 to 899 (TKDDNSFSDKNKEHS), and 912 to 922 (FWRERSGEHTQ).

It belongs to the SKI family. Interacts with SMAD2 and SMAD3. As to expression, expressed in cerebellum, spinal cord and testis. Isoform 2 is present in cerebellum (at protein level).

Its subcellular location is the nucleus. It is found in the cytoplasm. Exhibits transcriptional repressor activity. Acts as a TGF-beta antagonist in the nervous system. This chain is SKI family transcriptional corepressor 2, found in Homo sapiens (Human).